The chain runs to 425 residues: Podosporapepsin (425 aa).

Residues 1–28 form the signal peptide; the sequence is MVSLTDLFLASLLVPTSPWLCLPPRIDT. Positions 29–91 are cleaved as a propeptide — activation peptide; the sequence is IDQRGGRVTL…QEEAFARIKR (63 aa). Residues 108-419 enclose the Peptidase A1 domain; the sequence is YVTPVTIGTP…GTNPPRIGFA (312 aa). The active site involves Asp-126. Asn-184 and Asn-273 each carry an N-linked (GlcNAc...) asparagine glycan. The active site involves Asp-310. Cys-346 and Cys-381 form a disulfide bridge. A glycan (N-linked (GlcNAc...) asparagine) is linked at Asn-370.

The protein belongs to the peptidase A1 family.

In Podospora anserina (Pleurage anserina), this protein is Podosporapepsin (PAPA).